A 1498-amino-acid polypeptide reads, in one-letter code: Golgin subfamily A member 3 (1498 aa).

At Met-1 the chain carries N-acetylmethionine. The tract at residues 1-118 (MDGASAEQDG…GTSAEGSVRK (118 aa)) is disordered. At Ser-18 the chain carries Phosphoserine. Over residues 27–36 (PLKPPGPLVP) the composition is skewed to pro residues. The residue at position 57 (Ser-57) is a Phosphoserine. Positions 71 to 81 (PTPPFPDPPSS) are enriched in pro residues. The tract at residues 121–141 (LQSLRLSLPMQETQLCSTDSP) is interaction with GOPC. Disordered regions lie at residues 166-195 (RVKRQQERSSQPATKTRLFSTLDPELMLNP) and 216-325 (SVPR…SAST). A golgi-targeting domain region spans residues 172-257 (ERSSQPATKT…DYRTEDSNAG (86 aa)). 2 stretches are compositionally biased toward polar residues: residues 173-184 (RSSQPATKTRLF) and 269-291 (TKGSLKQNRSSAASVVSEISLSP). The residue at position 272 (Ser-272) is a Phosphoserine. The span at 315–324 (SDSSSYSSAS) shows a compositional bias: low complexity. 3 positions are modified to phosphoserine: Ser-385, Ser-389, and Ser-465. A coiled-coil region spans residues 394–1459 (VSLESSAAET…ALTVHESLSS (1066 aa)). The span at 789–801 (KEELDRGARRLEE) shows a compositional bias: basic and acidic residues. Disordered stretches follow at residues 789–809 (KEELDRGARRLEEGTEETSET), 974–993 (QKQKMRRLGSDLTSAQKEMK), 1376–1400 (RGAAKTRKEPKGEASSSNPATPIKI), and 1440–1498 (DSLQ…GPGE). Residue Ser-983 is modified to Phosphoserine. Residues 1376–1387 (RGAAKTRKEPKG) show a composition bias toward basic and acidic residues. A Phosphoserine modification is found at Ser-1392. A compositionally biased stretch (basic and acidic residues) spans 1440–1452 (DSLQRQMEEHALT).

In terms of assembly, homodimer. Interacts with GOLGA7. Isoform 1 interacts with GOPC while isoform 3 does not. Post-translationally, cleaved by caspases in apoptotic cells. As to expression, expressed in all tissues tested. Expressed in liver, testis, lung, heart, salivary gland and kidney.

Its subcellular location is the cytoplasm. The protein localises to the golgi apparatus. It is found in the golgi stack membrane. Golgi auto-antigen; probably involved in maintaining Golgi structure. This is Golgin subfamily A member 3 (GOLGA3) from Homo sapiens (Human).